The following is a 118-amino-acid chain: Large ribosomal subunit protein bL19 (118 aa).

This sequence belongs to the bacterial ribosomal protein bL19 family.

Its function is as follows. This protein is located at the 30S-50S ribosomal subunit interface and may play a role in the structure and function of the aminoacyl-tRNA binding site. This is Large ribosomal subunit protein bL19 from Campylobacter fetus subsp. fetus (strain 82-40).